The following is a 348-amino-acid chain: Holliday junction branch migration complex subunit RuvB (348 aa).

The large ATPase domain (RuvB-L) stretch occupies residues 4–186 (TDRIISANTA…FGIIQRLEFY (183 aa)). ATP-binding positions include Ile-25, Arg-26, Gly-67, Lys-70, Thr-71, Thr-72, 133-135 (EDY), Arg-176, Tyr-186, and Arg-223. Thr-71 is a binding site for Mg(2+). The segment at 187–257 (SIDDLSKIVY…IADKALSMLK (71 aa)) is small ATPAse domain (RuvB-S). Positions 260-348 (PVGFDHMDHR…SADQQQTLSI (89 aa)) are head domain (RuvB-H). Residues Arg-315 and Arg-320 each contribute to the DNA site.

Belongs to the RuvB family. In terms of assembly, homohexamer. Forms an RuvA(8)-RuvB(12)-Holliday junction (HJ) complex. HJ DNA is sandwiched between 2 RuvA tetramers; dsDNA enters through RuvA and exits via RuvB. An RuvB hexamer assembles on each DNA strand where it exits the tetramer. Each RuvB hexamer is contacted by two RuvA subunits (via domain III) on 2 adjacent RuvB subunits; this complex drives branch migration. In the full resolvosome a probable DNA-RuvA(4)-RuvB(12)-RuvC(2) complex forms which resolves the HJ.

It localises to the cytoplasm. The catalysed reaction is ATP + H2O = ADP + phosphate + H(+). The RuvA-RuvB-RuvC complex processes Holliday junction (HJ) DNA during genetic recombination and DNA repair, while the RuvA-RuvB complex plays an important role in the rescue of blocked DNA replication forks via replication fork reversal (RFR). RuvA specifically binds to HJ cruciform DNA, conferring on it an open structure. The RuvB hexamer acts as an ATP-dependent pump, pulling dsDNA into and through the RuvAB complex. RuvB forms 2 homohexamers on either side of HJ DNA bound by 1 or 2 RuvA tetramers; 4 subunits per hexamer contact DNA at a time. Coordinated motions by a converter formed by DNA-disengaged RuvB subunits stimulates ATP hydrolysis and nucleotide exchange. Immobilization of the converter enables RuvB to convert the ATP-contained energy into a lever motion, pulling 2 nucleotides of DNA out of the RuvA tetramer per ATP hydrolyzed, thus driving DNA branch migration. The RuvB motors rotate together with the DNA substrate, which together with the progressing nucleotide cycle form the mechanistic basis for DNA recombination by continuous HJ branch migration. Branch migration allows RuvC to scan DNA until it finds its consensus sequence, where it cleaves and resolves cruciform DNA. The protein is Holliday junction branch migration complex subunit RuvB of Francisella tularensis subsp. tularensis (strain FSC 198).